A 171-amino-acid polypeptide reads, in one-letter code: Crossover junction endodeoxyribonuclease RuvC (171 aa).

Active-site residues include Asp-7, Glu-67, and Asp-139. Mg(2+)-binding residues include Asp-7, Glu-67, and Asp-139.

The protein belongs to the RuvC family. As to quaternary structure, homodimer which binds Holliday junction (HJ) DNA. The HJ becomes 2-fold symmetrical on binding to RuvC with unstacked arms; it has a different conformation from HJ DNA in complex with RuvA. In the full resolvosome a probable DNA-RuvA(4)-RuvB(12)-RuvC(2) complex forms which resolves the HJ. Mg(2+) serves as cofactor.

It is found in the cytoplasm. The enzyme catalyses Endonucleolytic cleavage at a junction such as a reciprocal single-stranded crossover between two homologous DNA duplexes (Holliday junction).. In terms of biological role, the RuvA-RuvB-RuvC complex processes Holliday junction (HJ) DNA during genetic recombination and DNA repair. Endonuclease that resolves HJ intermediates. Cleaves cruciform DNA by making single-stranded nicks across the HJ at symmetrical positions within the homologous arms, yielding a 5'-phosphate and a 3'-hydroxyl group; requires a central core of homology in the junction. The consensus cleavage sequence is 5'-(A/T)TT(C/G)-3'. Cleavage occurs on the 3'-side of the TT dinucleotide at the point of strand exchange. HJ branch migration catalyzed by RuvA-RuvB allows RuvC to scan DNA until it finds its consensus sequence, where it cleaves and resolves the cruciform DNA. This chain is Crossover junction endodeoxyribonuclease RuvC, found in Geotalea uraniireducens (strain Rf4) (Geobacter uraniireducens).